We begin with the raw amino-acid sequence, 1204 residues long: MIDVNNFEYMKIGLASPDKIRSWSYGEVKKPETINYRTLKPEKDGLFCERIFGPQKDWECHCGKYKRVRYKGVVCDRCGVEVTRAKVRRERMGHIELAAPVSHIWYFKGIPSRMGLVLDMSPRALEEVIYFASYVVTESGDTPLDKKQLLSEKEYRAYRDRYGNTFQAAMGAEAIKKLLQDIDLDKEVDFLKEELKTAQGQRRTRAIKRLEVLESFRNSGNKPSWMILDVLPVIPPELRPMVQLDGGRFATSDLNDLYRRVINRNNRLKRLLDLGAPSIIVQNEKRMLQEAVDALIDNGRRGRPVTGPGNRPLKSLSHMLKGKQGRFRQNLLGKRVDYSGRSVIVVGPNLKMYQCGLPKEMALELFKPFVMKELVEKGLAHNIKSAKRKIERVQPEVWDVLESVIKEHPVLLNRAPTLHRLGIQAFEPTLVEGRAIRLHPLVCTAYNADFDGDQMAVHVPLSSEAQAEARLLMLAAQNILNPKDGKPVVTPSQDMVLGNYYLTLERAGAIGEGMVFKDTNEALLAYQNGYVHLHTRIAVPASSVNNNETFTEEQKGKLLLTTVGKLIFNEILPKSFPYINEPTKSNLEKETPAKYFVDKGANIKEVIASREEVAPFNKKILGNIIAEVFKRFKITETSRMLDRMKDLGFKYSTKAGITVGVADILVLGEKDEILHEAQAKVDKVIKQFRRGLITEEERYDRVISIWSNAKDVIQGKLMKSLDKRNPIFMMSDSGARGNASNFTQLAGMRGLMANPSGRIIELPIKSSFREGLTVLEYFISTHGARKGLADTALKTADSGYLTRRLVDVAQDVIVREDDCGTDRGLLIGAIKEGNEVIESLYDRLVGRFARKTVKHPETGEVLIRENELITEDIARAIENAGVETVHIRSAFTCNTRHGVCKKCYGRNLATGTDVEVGEAVGIIAAQSIGEPGTQLTMRTFHTGGVAGDDITQGLPRIQEIFEARNPKGQAVISEIDGVVVTINDVKDRQEVVVQGAVETRTYAIPYGARLKVTPGQEISHGQELTEGSIDPKELLKVTDITAVQEYLLREVQKVYRMQGVEIGDKHVEVMVRQMLRKVRVIDAGDTDVLPGTLLDIHQFTDANVKVLLEGKQPATARPVLLGITKASLETDSFLSAASFQETTRVLTDAAIKGKRDELLGLKENVIIGKLVPAGTGMNRYRKVDLVKTVQDDTNVENDEIYVEQ.

Residues Cys60, Cys62, Cys75, and Cys78 each coordinate Zn(2+). Mg(2+) contacts are provided by Asp449, Asp451, and Asp453. Residues Cys819, Cys893, Cys900, and Cys903 each coordinate Zn(2+).

It belongs to the RNA polymerase beta' chain family. As to quaternary structure, the RNAP catalytic core consists of 2 alpha, 1 beta, 1 beta' and 1 omega subunit. When a sigma factor is associated with the core the holoenzyme is formed, which can initiate transcription. The cofactor is Mg(2+). Requires Zn(2+) as cofactor.

It carries out the reaction RNA(n) + a ribonucleoside 5'-triphosphate = RNA(n+1) + diphosphate. In terms of biological role, DNA-dependent RNA polymerase catalyzes the transcription of DNA into RNA using the four ribonucleoside triphosphates as substrates. In Bacillus cytotoxicus (strain DSM 22905 / CIP 110041 / 391-98 / NVH 391-98), this protein is DNA-directed RNA polymerase subunit beta'.